Here is a 648-residue protein sequence, read N- to C-terminus: MRMRSLSAASSGYNGDPRGLGLERLKTVVRGKLRPSGSEIEWLWPSDQNNTASPAGAKTDQPTSAPRFFLTREATVFGPSWKPASRQIVASVLPVTGEMVMVSAERFSCMALFAVFLKLYRGFYMKPVAPCATHVRRPIMLAQFPVFDSRPSHGPQEQSGSHEPLARAAAQRRTKHNFLFMPGFPCLACVPISASAERHDRAMAACRAASLTEHLWPAYGIRALHMLNRTPAAASITRAVARRSRLLTADLTRSLETFPAGTITCAAGAPMIFSDCRLARLDFSAFYPCLYAAYVGKHRGLTKILHERLRRRAGSEDLKPALVTMFGGLRHVDANGYRFVVGASNIIAKAVEQTANRMGFGVAAYVKDGFWGAFDSSSKTTAEELRAECEKAANATLARLVVDKDGAGEPPVSLVLRLEGVYTDGLLINANKYWLFNSESGDSFICGVMGGHERSGLSRETTAAADDILKKIKASAKSIDDVEAIARSRIDAWIYAIFGHRGDVEFWAEQTPGDKDFLIPEEIRTTTVGKLEAADSCLGGELSYVFIPKNTQDTGAAKTKGGGARGWHSAPAAAFPCSLVEDVFCIKINYEAHLLPRLEGLLAWSRIYAWLQFRNQIPLADDEDESTTQAKETARIDYNYGDVSFLFA.

The disordered stretch occupies residues 43–63 (LWPSDQNNTASPAGAKTDQPT).

This sequence belongs to the herpesviridae HEPA family. In terms of assembly, associates with the primase and the helicase to form the helicase-primase complex. Interacts with the origin-binding protein. Interacts with the polymerase catalytic subunit.

The protein localises to the host nucleus. Its function is as follows. Component of the helicase/primase complex. Unwinds the DNA at the replication forks and generates single-stranded DNA for both leading and lagging strand synthesis. The primase synthesizes short RNA primers on the lagging strand that the polymerase presumably elongates using dNTPs. The primase-associated factor has no known catalytic activity in the complex and may serve to facilitate the formation of the replisome by directly interacting with the origin-binding protein and the polymerase. In Amazona oratrix (yellow-headed parrot), this protein is DNA helicase/primase complex-associated protein (UL8).